The sequence spans 176 residues: Protein FAM89A (176 aa).

Residues D140 to H165 form a disordered region.

Belongs to the FAM89 family.

The polypeptide is Protein FAM89A (Fam89a) (Rattus norvegicus (Rat)).